The chain runs to 467 residues: Plasma alpha-L-fucosidase (467 aa).

The signal sequence occupies residues 1-28 (MRPQELPRLAFPLLLLLLLLLPPPPCPA). Asn171 and Asn239 each carry an N-linked (GlcNAc...) asparagine glycan. Ser301 carries the phosphoserine; by FAM20C modification. Asn377 carries N-linked (GlcNAc...) asparagine glycosylation.

Belongs to the glycosyl hydrolase 29 family. Homotetramer.

Its subcellular location is the secreted. It catalyses the reaction an alpha-L-fucoside + H2O = L-fucose + an alcohol. In terms of biological role, alpha-L-fucosidase is responsible for hydrolyzing the alpha-1,6-linked fucose joined to the reducing-end N-acetylglucosamine of the carbohydrate moieties of glycoproteins. The polypeptide is Plasma alpha-L-fucosidase (FUCA2) (Homo sapiens (Human)).